The sequence spans 222 residues: MVLISATRDFRERTKSKLVKIMIWAGIVVITFAIAVRIYPIFIFLLKERIKPLVEALYDKLPWIWEVSLSRYWDRLIDFLDRYLWACAQRIQTGIRKQKGEFVVTFSCRVKKRLYARAIEVGIHLSLLSNLFWILKTTLAVGYRLLWVLYYIISFEGFLGSFRLYLVYFGFYCLLFSGKWLRTSEDRGERQAQISGILLRGMLIECAFSVLCLEEDSNLHAL.

This sequence belongs to the ycf73 family.

The protein resides in the plastid. The protein localises to the chloroplast. This is an uncharacterized protein from Oryza nivara (Indian wild rice).